Reading from the N-terminus, the 490-residue chain is Tektin-3 (490 aa).

O-linked (GalNAc...) threonine glycans are attached at residues T7, T9, and T11. N-linked (GlcNAc...) asparagine glycans are attached at residues N41, N86, N111, and N276. Positions 415–461 (MAQLRLVNEVYEVDETIQTLQQRLRDSEDTLQSLAHTKATLEHDLAV) form a coiled coil.

This sequence belongs to the tektin family. Microtubule inner protein component of sperm flagellar doublet microtubules. Interacts with TEKT1, TEKT2, TEKT4 and TEKT5. Interacts with CCDC38. Post-translationally, N- and O-glycosylated. Ubiquitinated, leading to its degradation. Deubiquitinated by USP16, promoting its stability. In terms of processing, may be proteolytically processed during the epididymal transit of spermatozoa. In terms of tissue distribution, expressed preferentially in testis. Expressed predominantly in late pachytene spermatocytes and early round spermatids. Expressed in spermatozoa.

It localises to the cytoplasm. The protein resides in the cytoskeleton. Its subcellular location is the cilium axoneme. It is found in the flagellum axoneme. The protein localises to the cytoplasmic vesicle. It localises to the secretory vesicle. The protein resides in the acrosome outer membrane. Functionally, microtubule inner protein (MIP) part of the dynein-decorated doublet microtubules (DMTs) in cilia and flagellar axoneme. Forms filamentous polymers in the walls of ciliary and flagellar microtubules. Required for normal sperm mobility. The polypeptide is Tektin-3 (Tekt3) (Mus musculus (Mouse)).